Consider the following 272-residue polypeptide: MLELIKAIFLGIVEGITEWLPISSTGHMILVEEFINMNLSDEFMEMFRVVIQLGAIMAVVVLYWNKLFPFSFEDRIQIKKDTFSLWIKVLAATLPAALIGVPFDDKIDELFYNYITVAITLIVYGVLFIIMENRNKSKIPAISTFEELGYKAVLLIGAFQVLALIPGTSRSGATILGAIMIGCSREIAAEFSFYLAIPVMFGASLLKLVKFGFAFSQTELIILLTGMIVAFAVSIFAIKFLMGYIKRNDFKAFGYYRIILGLIVVLYFLAVR.

The next 8 helical transmembrane spans lie at 2 to 22 (LELI…WLPI), 50 to 70 (VIQL…LFPF), 83 to 103 (FSLW…GVPF), 110 to 130 (LFYN…LFII), 148 to 168 (LGYK…IPGT), 195 to 215 (LAIP…GFAF), 220 to 240 (LIIL…AIKF), and 250 to 270 (FKAF…YFLA).

This sequence belongs to the UppP family.

The protein localises to the cell membrane. It catalyses the reaction di-trans,octa-cis-undecaprenyl diphosphate + H2O = di-trans,octa-cis-undecaprenyl phosphate + phosphate + H(+). Catalyzes the dephosphorylation of undecaprenyl diphosphate (UPP). Confers resistance to bacitracin. In Acetivibrio thermocellus (strain ATCC 27405 / DSM 1237 / JCM 9322 / NBRC 103400 / NCIMB 10682 / NRRL B-4536 / VPI 7372) (Clostridium thermocellum), this protein is Undecaprenyl-diphosphatase.